The chain runs to 453 residues: Serine incorporator 1 (453 aa).

Gly2 is lipidated: N-myristoyl glycine. Residues 2 to 39 (GSVLGLCSMASWIPCLCGSAPCLLCRCCPSGNNSTVTR) are Cytoplasmic-facing. Residues 40 to 60 (LIYALFLLVGVCVACVMLIPG) form a helical membrane-spanning segment. The Lumenal portion of the chain corresponds to 61–88 (MEEQLNKIPGFCENEKGMVPCNILVGYK). Residues 89–109 (AVYRLCFGLAMFYLLLSLLMI) traverse the membrane as a helical segment. At 110-123 (KVKSSSDPRAAIHN) the chain is on the cytoplasmic side. Residues 124–144 (GFWFFKFAAAIAIIIGAFFIP) traverse the membrane as a helical segment. Topologically, residues 145–151 (EGTFTTV) are lumenal. A helical membrane pass occupies residues 152–172 (WFYVGMAGAFCFILIQLVLLI). The Cytoplasmic segment spans residues 173–197 (DFAHSWNESWVEKMEEGNSRCWYAA). Residues 198–218 (LLSATALNYLLSLVAVVLFFV) form a helical membrane-spanning segment. The Lumenal portion of the chain corresponds to 219 to 231 (YYTHPASCAENKA). Residues 232 to 252 (FISVNMLLCLGASIMSILPKI) traverse the membrane as a helical segment. Topologically, residues 253–259 (QESQPRS) are cytoplasmic. The chain crosses the membrane as a helical span at residues 260–280 (GLLQSSVITVYTMYLTWSAMT). Topologically, residues 281–309 (NEPETECNPSLLNIIGYNTTSTVSKEGQS) are lumenal. The helical transmembrane segment at 310–330 (VQWWHTQGIIGLILFLLCVFY) threads the bilayer. Residues 331–387 (SSIRTSNNSQVNKLTLTSDESTLIEDGGARNDGSLEDGDDVHRAVDNERDGVTYSYS) lie on the Cytoplasmic side of the membrane. Ser351 is subject to Phosphoserine. Thr352 carries the phosphothreonine modification. Ser364 bears the Phosphoserine mark. A helical transmembrane segment spans residues 388-408 (FFHFMLFLASLYIMMTLTNWY). Topologically, residues 409–426 (RYEPSREMKSQWTAVWVK) are lumenal. Residues 427–447 (ISSSWIGIVLYVWTLVAPLVL) traverse the membrane as a helical segment. The Cytoplasmic portion of the chain corresponds to 448–453 (TNRDFD).

Belongs to the TDE1 family. Interacts with SPTLC1.

The protein resides in the endoplasmic reticulum membrane. Enhances the incorporation of serine into phosphatidylserine and sphingolipids. The protein is Serine incorporator 1 (SERINC1) of Bos taurus (Bovine).